Here is a 282-residue protein sequence, read N- to C-terminus: Putative hydrolase BceJ2315_61450 (282 aa).

Mg(2+) is bound by residues glutamate 124, glutamate 126, and aspartate 155.

This sequence belongs to the FAH family. Mg(2+) serves as cofactor.

The chain is Putative hydrolase BceJ2315_61450 from Burkholderia cenocepacia (strain ATCC BAA-245 / DSM 16553 / LMG 16656 / NCTC 13227 / J2315 / CF5610) (Burkholderia cepacia (strain J2315)).